Reading from the N-terminus, the 170-residue chain is RNA polymerase sigma factor TcsR (170 aa).

Residues 122 to 169 (IKDLTQNEKNILRKIYLHGLRESEISRELNISRQAVNKTHLRALEKLK) form a sigma-70 factor domain-4 region. A DNA-binding region (H-T-H motif) is located at residues 143-162 (ESEISRELNISRQAVNKTHL).

The protein belongs to the sigma-70 factor family.

In terms of biological role, sigma factors are initiation factors that promote the attachment of RNA polymerase to specific initiation sites and are then released. Transcriptional regulator specifically required to activate expression of the toxin gene locus, composed of tcsL and tcdE/utxA. The protein is RNA polymerase sigma factor TcsR of Paraclostridium sordellii (strain ATCC 9714 / DSM 2141 / JCM 3814 / LMG 15708 / NCIMB 10717 / 211) (Clostridium sordellii).